The chain runs to 1124 residues: Eukaryotic translation initiation factor 3 subunit A (1124 aa).

A coiled-coil region spans residues 96–124; that stretch reads LKMAEERTEQAQQQSSQATVDIDDLDNLA. The 182-residue stretch at 317-498 folds into the PCI domain; that stretch reads IQRMTTHVLI…ECVHFGTDLS (182 aa). Composition is skewed to basic and acidic residues over residues 812–851 and 860–883; these read EERR…RQLA and EVER…ERRP. The disordered stretch occupies residues 812 to 1124; it reads EERRRIEEEL…EEGWTDVKHR (313 aa). The segment covering 900–910 has biased composition (low complexity); that stretch reads PAAAAPANPAA. Basic and acidic residues-rich tracts occupy residues 928–952, 960–990, 1007–1048, and 1063–1100; these read PRER…EKDG, RGGD…DRGP, PRRD…RGGG, and DDNR…EARP.

The protein belongs to the eIF-3 subunit A family. As to quaternary structure, component of the eukaryotic translation initiation factor 3 (eIF-3) complex.

The protein localises to the cytoplasm. Its function is as follows. RNA-binding component of the eukaryotic translation initiation factor 3 (eIF-3) complex, which is involved in protein synthesis of a specialized repertoire of mRNAs and, together with other initiation factors, stimulates binding of mRNA and methionyl-tRNAi to the 40S ribosome. The eIF-3 complex specifically targets and initiates translation of a subset of mRNAs involved in cell proliferation. This is Eukaryotic translation initiation factor 3 subunit A from Anopheles gambiae (African malaria mosquito).